Reading from the N-terminus, the 288-residue chain is Pyruvate synthase subunit PorB (288 aa).

Residues cysteine 16, cysteine 19, and cysteine 44 each coordinate [4Fe-4S] cluster. The span at 137–148 (STPYGASTTTSP) shows a compositional bias: polar residues. Residues 137 to 159 (STPYGASTTTSPHGKESFGEDRP) are disordered. Positions 149 to 159 (HGKESFGEDRP) are enriched in basic and acidic residues. Position 208 (cysteine 208) interacts with [4Fe-4S] cluster.

In terms of assembly, heterotetramer of one alpha, one beta, one delta and one gamma chain. [4Fe-4S] cluster serves as cofactor.

The enzyme catalyses 2 oxidized [2Fe-2S]-[ferredoxin] + pyruvate + CoA = 2 reduced [2Fe-2S]-[ferredoxin] + acetyl-CoA + CO2 + H(+). The sequence is that of Pyruvate synthase subunit PorB (porB) from Methanothermobacter thermautotrophicus (strain ATCC 29096 / DSM 1053 / JCM 10044 / NBRC 100330 / Delta H) (Methanobacterium thermoautotrophicum).